The following is a 273-amino-acid chain: Putative pyruvate, phosphate dikinase regulatory protein (273 aa).

153-160 (GISRTSKT) contacts ADP.

It belongs to the pyruvate, phosphate/water dikinase regulatory protein family. PDRP subfamily.

It carries out the reaction N(tele)-phospho-L-histidyl/L-threonyl-[pyruvate, phosphate dikinase] + ADP = N(tele)-phospho-L-histidyl/O-phospho-L-threonyl-[pyruvate, phosphate dikinase] + AMP + H(+). The catalysed reaction is N(tele)-phospho-L-histidyl/O-phospho-L-threonyl-[pyruvate, phosphate dikinase] + phosphate + H(+) = N(tele)-phospho-L-histidyl/L-threonyl-[pyruvate, phosphate dikinase] + diphosphate. Bifunctional serine/threonine kinase and phosphorylase involved in the regulation of the pyruvate, phosphate dikinase (PPDK) by catalyzing its phosphorylation/dephosphorylation. The polypeptide is Putative pyruvate, phosphate dikinase regulatory protein (Rhizobium johnstonii (strain DSM 114642 / LMG 32736 / 3841) (Rhizobium leguminosarum bv. viciae)).